We begin with the raw amino-acid sequence, 187 residues long: Adenylate kinase (187 aa).

An ATP-binding site is contributed by 11–16 (GAGKGT). Residues 31-60 (STGDILREAVKNQTAMGIEAKRYMDAGDLV) form an NMP region. Residues Thr32, Arg37, 58-60 (DLV), 86-89 (GFPR), and Gln93 each bind AMP. Residues 127–137 (GRAEIEGRADD) form an LID region. Arg128 serves as a coordination point for ATP. Residues Arg134 and Arg145 each coordinate AMP. Position 173 (Gly173) interacts with ATP.

Belongs to the adenylate kinase family. In terms of assembly, monomer.

The protein localises to the cytoplasm. The catalysed reaction is AMP + ATP = 2 ADP. It functions in the pathway purine metabolism; AMP biosynthesis via salvage pathway; AMP from ADP: step 1/1. Catalyzes the reversible transfer of the terminal phosphate group between ATP and AMP. Plays an important role in cellular energy homeostasis and in adenine nucleotide metabolism. This chain is Adenylate kinase, found in Leptospira interrogans serogroup Icterohaemorrhagiae serovar copenhageni (strain Fiocruz L1-130).